The chain runs to 395 residues: Major capsid protein P3 (395 aa).

As to quaternary structure, homotrimer.

It localises to the virion. Major capsid protein self-assembles to form an icosahedral capsid with a pseudo T=25 symmetry, about 66 nm in diameter, and consisting of 240 capsid proteins trimers. The capsid encapsulates an inner membrane and the genomic dsDNA genome. The major coat protein P3 and two assembly factors (P10 and P17) are needed during the assembly of the virus particle inside the host cell, when the capsid protein multimers are capable of enclosing the host-derived membrane, containing the virus-encoded membrane-associated proteins. The chain is Major capsid protein P3 (III) from Acinetobacter calcoaceticus (Arthrobacter siderocapsulatus).